Here is a 1071-residue protein sequence, read N- to C-terminus: Tricorn protease (1071 aa).

The six-bladed beta propeller stretch occupies residues 39-310 (MPNLLLNPDI…EKIEKIEIGD (272 aa)). The binds the substrate's C-terminus stretch occupies residues 131–132 (RR). The seven-bladed beta propeller stretch occupies residues 326-675 (AEDFSPLDGD…EDERTVETDK (350 aa)). The C-1; helical bundle stretch occupies residues 679–745 (VSSIHEEFLQ…VEMQGEYRTS (67 aa)). H746 serves as the catalytic Charge relay system. Residues 761–855 (RSGRIACDFK…DLMIDILDDD (95 aa)) are PDZ-like. The tract at residues 856-1061 (RFIRYRSWVE…IDALIEELRN (206 aa)) is C-2; alpha-beta sandwich. 916–918 (GGG) serves as a coordination point for substrate. The active-site Nucleophile is the S965. Residue 993–995 (GIT) coordinates substrate. The active-site Charge relay system is the E1023.

The protein belongs to the peptidase S41B family. As to quaternary structure, part of the Tricorn proteolytic complex. Assembles to form a hexameric toroid, 20 copies of which may then assemble to form an icosahedral supermolecule of 14.6 MDa.

Its subcellular location is the cytoplasm. Its function is as follows. Tricorn degrades oligopeptides (probably derived from the proteasome) and channels the products to F1, F2 and F3 proteases, which then catalyze the terminal degradation step, yielding free amino acids. The protein is Tricorn protease (tri) of Thermoplasma acidophilum (strain ATCC 25905 / DSM 1728 / JCM 9062 / NBRC 15155 / AMRC-C165).